Reading from the N-terminus, the 210-residue chain is Phosphoenolpyruvate guanylyltransferase (210 aa).

Phosphoenolpyruvate-binding residues include Thr130, Gly146, and Ser149.

It belongs to the CofC family.

It catalyses the reaction phosphoenolpyruvate + GTP + H(+) = enolpyruvoyl-2-diphospho-5'-guanosine + diphosphate. The protein operates within cofactor biosynthesis; coenzyme F420 biosynthesis. Guanylyltransferase that catalyzes the activation of phosphoenolpyruvate (PEP) as enolpyruvoyl-2-diphospho-5'-guanosine, via the condensation of PEP with GTP. It is involved in the biosynthesis of coenzyme F420, a hydride carrier cofactor. This Roseiflexus castenholzii (strain DSM 13941 / HLO8) protein is Phosphoenolpyruvate guanylyltransferase.